A 250-amino-acid polypeptide reads, in one-letter code: uncharacterized protein (250 aa).

The protein belongs to the carbohydrate kinase PfkB family.

This is an uncharacterized protein from Archaeoglobus fulgidus (strain ATCC 49558 / DSM 4304 / JCM 9628 / NBRC 100126 / VC-16).